The primary structure comprises 357 residues: MDNYEKVRVVGRGAFGVCWLCRGKNDASHQKVIIKLINTHGMTEKEENSIQSEVNLLKKVQHPLIIGYIDSFIMDNQLGIVMQYAEGGTLERLINDQRAIKDSNMREYFPEKTVLDYFTQILIALNHMHQKNIVHRDLKPQNILMNRRKTVLKLSDFGISKELGTKSAASTVIGTPNYLSPEICESRPYNQKSDMWSLGCVLYELLQLERAFDGENLPAIVMKITRSKQNPLGDHVSNDVKMLVENLLKTHTDKRPDVSQLLSDPLVLPYLISIHCDLGRIEPPPTDKRKPSASLSSRLRTYPTQSTLRPYSLSSNAPTTHLTQLTPMPSHIDSGFFSSGRTSNQRTQSRSQVHSKY.

Residues 4–267 enclose the Protein kinase domain; that stretch reads YEKVRVVGRG…VSQLLSDPLV (264 aa). ATP is bound by residues 10 to 18 and Lys-35; that span reads VGRGAFGVC. The active-site Proton acceptor is Asp-137. Residues 281-290 show a composition bias toward basic and acidic residues; the sequence is IEPPPTDKRK. The interval 281-357 is disordered; sequence IEPPPTDKRK…QSRSQVHSKY (77 aa). Composition is skewed to polar residues over residues 293-327 and 336-357; these read ASLS…QLTP and FFSS…HSKY.

Belongs to the protein kinase superfamily. NEK Ser/Thr protein kinase family. NIMA subfamily. The cofactor is Mg(2+). As to expression, expressed in hypodermal cells including in hyp7 syncytium but not in seam cells.

The protein localises to the cytoplasm. The catalysed reaction is L-seryl-[protein] + ATP = O-phospho-L-seryl-[protein] + ADP + H(+). It carries out the reaction L-threonyl-[protein] + ATP = O-phospho-L-threonyl-[protein] + ADP + H(+). In terms of biological role, probable serine/threonine-protein kinase required for the completion of molting. May play a role in endocytosis in the hypodermis syncytium. The polypeptide is Serine/threonine-protein kinase nekl-2 (Caenorhabditis elegans).